Consider the following 527-residue polypeptide: Inositolphosphotransferase 1 (527 aa).

The Cytoplasmic segment spans residues 1–24 (MNVIFSLASFVKNMYNASLNQRNL). Residues 25-45 (ISLPFNFMLNFAPVFIWLSIF) form a helical membrane-spanning segment. At 46–99 (KRAGLIPIRLRPDIHSKFAFFADQFLFGDYWHELTVQLPDNTSKLFFWSFISSS) the chain is on the lumenal side. A helical transmembrane segment spans residues 100–120 (AFLLVFLICIPFAIWYYIYYI). Topologically, residues 121–152 (KHVNYNLLEWFANIFHYPCKRKQRPIQKRFRT) are cytoplasmic. A helical transmembrane segment spans residues 153 to 173 (IFIPFALPLFTFVILNIDHFF). The Lumenal segment spans residues 174–190 (AYQSDANFTKTKDLLAW). The chain crosses the membrane as a helical span at residues 191-211 (FSYVILHLTAPILTAVYLYVF). Residues 212–219 (QPPGTLKC) are Cytoplasmic-facing. The helical transmembrane segment at 220–240 (FSFALGLQNIAGVLTHLLVPM) threads the bilayer. Residues 241–288 (ASPWFTHLYGIDDTEHVNYTQEGFAAGLIRVDSHLGTHLNTKGFHMSP) are Lumenal-facing. The helical transmembrane segment at 289–309 (IVFGAVPSLHSAIAFQCFLFL) threads the bilayer. Residues 310-435 (VSRSTSLKHR…KWIFKIVNDG (126 aa)) are Cytoplasmic-facing. A disordered region spans residues 331-404 (NDSSTFKLSE…GGGDGSIINS (74 aa)). The span at 376–389 (ERSSSPSSSFTVSS) shows a compositional bias: low complexity. Residues 436 to 456 (FIPKFWAILYIILQWWATMYL) form a helical membrane-spanning segment. Residues 457-461 (DHHYR) lie on the Lumenal side of the membrane. A helical transmembrane segment spans residues 462–482 (FDLFVGVLYAMTSFIIINWFV). Residues 483-527 (LQPKVLKKWIHIRLGDKVDTRNEARTFGMRVFCGTKMEWFFDPLA) are Cytoplasmic-facing.

It localises to the golgi apparatus membrane. The enzyme catalyses an alpha-D-mannosyl-(1&lt;-&gt;6)-1D-myo-inositol-1-phospho-N-[(R)-2-hydroxy-very-long-chain fatty acyl]-(R)-4-hydroxysphingoid base + a 1,2-diacyl-sn-glycero-3-phospho-(1D-myo-inositol) = an alpha-D-mannosyl-6-(1D-myo-inositol phospho)-(1&lt;-&gt;6)-1D-myo-inositol-1-phospho-N-[(R)-2-hydroxy-very-long-chain fatty acyl]-(R)-4-hydroxysphingoid base + a 1,2-diacyl-sn-glycerol. It carries out the reaction a mannosylinositol-1-phospho-N-acyl-sphingoid base + a 1,2-diacyl-sn-glycero-3-phospho-(1D-myo-inositol) = an inositol phosphomannosylnositol-1-phospho-N-acylsphingoid base + a 1,2-diacyl-sn-glycerol. It catalyses the reaction a mannosylinositol-1-phospho-N-(2-hydroxyacyl)-4R-hydroxysphingoid base + a 1,2-diacyl-sn-glycero-3-phospho-(1D-myo-inositol) = an inositol phosphomannosylnositol-1-phospho-N-(2-hydroxyacyl)-4R-hydroxysphingoid base + a 1,2-diacyl-sn-glycerol. Its function is as follows. Catalyzes the addition of a phosphorylinositol group onto mannosyl phosphorylinositol ceramide (MIPC) to form mannosyl diphosphorylinositol ceramide (M(IP)2C), the major sphingolipid in membranes of S.cerevisiae. The polypeptide is Inositolphosphotransferase 1 (Saccharomyces cerevisiae (strain ATCC 204508 / S288c) (Baker's yeast)).